Here is a 502-residue protein sequence, read N- to C-terminus: ATP synthase subunit alpha, chloroplastic (502 aa).

170–177 (GDRQTGKT) lines the ATP pocket.

Belongs to the ATPase alpha/beta chains family. F-type ATPases have 2 components, CF(1) - the catalytic core - and CF(0) - the membrane proton channel. CF(1) has five subunits: alpha(3), beta(3), gamma(1), delta(1), epsilon(1). CF(0) has four main subunits: a, b, b' and c.

Its subcellular location is the plastid. It is found in the chloroplast thylakoid membrane. The enzyme catalyses ATP + H2O + 4 H(+)(in) = ADP + phosphate + 5 H(+)(out). Functionally, produces ATP from ADP in the presence of a proton gradient across the membrane. The alpha chain is a regulatory subunit. In Tupiella akineta (Green alga), this protein is ATP synthase subunit alpha, chloroplastic.